The primary structure comprises 279 residues: Reaction center protein L chain (279 aa).

Helical transmembrane passes span 33–56, 85–113, and 116–141; these read GFFGVTTLFFSVLGTALIIWGASQ, GLWQIITVCAIGAFVSWALREVEICRKLG, and YHVPIAFSFAILAYVTLVVIRPILMG. His154 and His174 together coordinate (7R,8Z)-bacteriochlorophyll b. Residues 171–200 form a helical membrane-spanning segment; sequence NPAHMLAITFFFTTTLAMSMHGGLILSAAN. A Fe cation-binding site is contributed by His191. Phe217 is an a ubiquinone binding site. A helical transmembrane segment spans residues 226–252; sequence GSLGIHRLGLFLALSAAFWSAVCIVIS. Residue His231 coordinates Fe cation.

It belongs to the reaction center PufL/M/PsbA/D family. As to quaternary structure, reaction center is composed of four bacteriochlorophylls, two bacteriopheophytins, two ubiquinones, one iron, and three highly hydrophobic polypeptide chains (designated L, M, and H).

Its subcellular location is the cell inner membrane. Its function is as follows. The reaction center is a membrane-bound complex that mediates the initial photochemical event in the electron transfer process of photosynthesis. This is Reaction center protein L chain (pufL) from Rubrivivax gelatinosus (Rhodocyclus gelatinosus).